We begin with the raw amino-acid sequence, 384 residues long: GDSL esterase/lipase ENOD8 (384 aa).

The N-terminal stretch at 1–31 (MKFMAKIELSRHIPLVTLIVLVLCITPPIFA) is a signal peptide. The active-site Nucleophile is serine 46. Residues asparagine 105, asparagine 191, asparagine 198, asparagine 276, and asparagine 330 are each glycosylated (N-linked (GlcNAc...) asparagine). Catalysis depends on residues aspartate 349 and histidine 352.

Belongs to the 'GDSL' lipolytic enzyme family. In terms of tissue distribution, expressed in root nodules (at protein level).

The protein localises to the symbiosome. In terms of biological role, has lipase and esterase activities. Probably involved in root nodule physiology. The polypeptide is GDSL esterase/lipase ENOD8 (Medicago truncatula (Barrel medic)).